Consider the following 619-residue polypeptide: Trihelix transcription factor GTL2 (619 aa).

Disordered regions lie at residues 11–41 (HRFI…VSFS) and 62–100 (HHHH…HHHH). Pro residues predominate over residues 16-27 (SPPPPPPLPPHQ). Residues 102–154 (PWCSDEVLALLRFRSTVENWFPEFTWEHTSRKLAEVGFKRSPQECKEKFEEEE) form the Myb-like 1 domain. Residues 307–361 (VRNMIAQQEEMHKKLLEDMVKKEEEKIAREEAWKKQEIERVNKEVEIRAQEQAMA) adopt a coiled-coil conformation. 2 disordered regions span residues 382–414 (VVQN…SSLL) and 434–458 (STKT…DLGK). The segment covering 384-396 (QNPTSPSQDSSSL) has biased composition (polar residues). Positions 435–444 (TKTLKPKNQN) are enriched in low complexity. The span at 448–458 (PKSDDKSDLGK) shows a compositional bias: basic and acidic residues. Residues 459-526 (RWPKDEVLAL…RCKEKWENIN (68 aa)) form the Myb-like 2 domain. The Nuclear localization signal motif lies at 503–510 (SKKMLEIG). Residues 557-619 (SQPPTGTTAT…VQFSGFDLEF (63 aa)) are disordered. Residues 561 to 574 (TGTTATTATTATSA) are compositionally biased toward low complexity. A compositionally biased stretch (basic and acidic residues) spans 575-585 (RDLDTRPEENR).

The protein resides in the nucleus. Functionally, probable transcription factor that binds specific DNA sequence. The polypeptide is Trihelix transcription factor GTL2 (Arabidopsis thaliana (Mouse-ear cress)).